Reading from the N-terminus, the 99-residue chain is Putative protein adenylyltransferase MJ0141 (99 aa).

A GSX(10)DXD motif motif is present at residues 29 to 43 (GSYARGDYDEESDVD). 2 residues coordinate Mg(2+): Asp41 and Asp43.

It belongs to the MntA antitoxin family. It depends on Mg(2+) as a cofactor.

It carries out the reaction L-tyrosyl-[protein] + ATP = O-(5'-adenylyl)-L-tyrosyl-[protein] + diphosphate. The catalysed reaction is O-(5'-adenylyl)-L-tyrosyl-[protein] + ATP = O-[5'-(adenylyl-(5'-&gt;3')-adenylyl)]-L-tyrosyl-[protein] + diphosphate. In terms of biological role, putative antitoxin component of a putative type VII toxin-antitoxin (TA) system. Its cognate toxin might be MF0142, which it might AMPylate. The polypeptide is Putative protein adenylyltransferase MJ0141 (Methanocaldococcus jannaschii (strain ATCC 43067 / DSM 2661 / JAL-1 / JCM 10045 / NBRC 100440) (Methanococcus jannaschii)).